Here is a 675-residue protein sequence, read N- to C-terminus: MAQVAKKILVTCALPYANGSIHLGHMLEHIQADIWVRFQRMRGNQVHFICADDAHGTPIMLKAQQMGIEPEQMIAEMSQEHQQDFAGFAISYDNYHSTHSDENRELSSLIYGRLKANGYIKNRTISQLYDPEKGMFLPDRFVKGTCPKCKAPEQYGDNCEVCGATYSPTELIDPKSAVSGATPVMRESEHFFFDLPAFSDMLQAWTRSGALQEQVANKMQEWFDSGLQQWDITRDAPYFGFEVPDAPGKYFYVWLDAPIGYMGAFKNLCDKRGDLDFDEFWGKDAKTDLYHFIGKDIVYFHSLFWPAMLEGSNFRKPTNLFVHGYVTVNGAKMSKSRGTFIKAGTYLKYLDADCLRYYYAAKLSSRIDDIDLNLEDFVQRVNADIVNKVVNLASRNAGFINKRFAGQLADQLADPVLYKTFTDAATSIADAYNNRESGKAIREIMALADVANRYVDEQAPWVVAKQEGRDADLHAICSMGINLFRVLMTYLKPVLPSLTERTEAFLNTELTWDSIEQPLLGHSITAFKALFNRIDLDKVNEMVASSKEDMAPATRVTGPLADDPIQETISFDDFAKVDMRIALIQQAEFVEGSDKLLKLTLELGGETRQVFSGLRSAYPDPKALEGRMTVMVANLAPRKMRFGVSEGMVMAAGPGGSDIFLLSPDSGAQPGMQVK.

The 'HIGH' region signature appears at 15-25 (PYANGSIHLGH). 4 residues coordinate Zn(2+): C146, C149, C159, and C162. A 'KMSKS' region motif is present at residues 332 to 336 (KMSKS). K335 is a binding site for ATP. One can recognise a tRNA-binding domain in the interval 573–675 (DFAKVDMRIA…SGAQPGMQVK (103 aa)).

The protein belongs to the class-I aminoacyl-tRNA synthetase family. MetG type 1 subfamily. As to quaternary structure, homodimer. Requires Zn(2+) as cofactor.

It is found in the cytoplasm. The enzyme catalyses tRNA(Met) + L-methionine + ATP = L-methionyl-tRNA(Met) + AMP + diphosphate. Functionally, is required not only for elongation of protein synthesis but also for the initiation of all mRNA translation through initiator tRNA(fMet) aminoacylation. The chain is Methionine--tRNA ligase from Yersinia pestis bv. Antiqua (strain Angola).